A 452-amino-acid chain; its full sequence is UDP-N-acetylmuramoylalanine--D-glutamate ligase (452 aa).

ATP is bound at residue G119–T125.

This sequence belongs to the MurCDEF family.

Its subcellular location is the cytoplasm. It carries out the reaction UDP-N-acetyl-alpha-D-muramoyl-L-alanine + D-glutamate + ATP = UDP-N-acetyl-alpha-D-muramoyl-L-alanyl-D-glutamate + ADP + phosphate + H(+). It participates in cell wall biogenesis; peptidoglycan biosynthesis. Its function is as follows. Cell wall formation. Catalyzes the addition of glutamate to the nucleotide precursor UDP-N-acetylmuramoyl-L-alanine (UMA). The protein is UDP-N-acetylmuramoylalanine--D-glutamate ligase of Streptococcus pyogenes serotype M6 (strain ATCC BAA-946 / MGAS10394).